Reading from the N-terminus, the 381-residue chain is Ribosomal lysine N-methyltransferase set11 (381 aa).

One can recognise an SET domain in the interval 23–224 (PSLEFSVIPD…KGEQIFLCYG (202 aa)). S-adenosyl-L-methionine is bound at residue tyrosine 223.

This sequence belongs to the class V-like SAM-binding methyltransferase superfamily. RKM2 family.

It is found in the cytoplasm. It localises to the nucleus. Its subcellular location is the nucleolus. Functionally, S-adenosyl-L-methionine-dependent protein-lysine N-methyltransferase that trimethylates 60S ribosomal protein L12 (rpl1201 and rpl1202) at 'Lys-4' and may dimethylate L12 also at 'Lys-40' and 'Lys-41'. Overexpression causes a severe growth defect. Has a role in meiosis. This chain is Ribosomal lysine N-methyltransferase set11 (set11), found in Schizosaccharomyces pombe (strain 972 / ATCC 24843) (Fission yeast).